Here is a 241-residue protein sequence, read N- to C-terminus: MAEIKYKRILLKLSGEAFKGATGYGIDIPTVRNIAQEIKHICLMGVEVAIVVGGGNIWRGATAAKEGIDRVSADYAGMLATIINAITLQDALEREGIVTRTQSALSVQQVAEPYIRRRAVRHLEKGRVVIFAGGTGNPYMTTDTAAALRAIEIEASVLLMAKNKVDGVYTADPQKHPEATLFQHLTYMEAINKRLQVMDATALSLCLDNKLPIIVFDLQSSESLVSAISGQPIGTLISSES.

Residue 12–15 (KLSG) participates in ATP binding. The involved in allosteric activation by GTP stretch occupies residues 20–25 (GATGYG). Gly-54 contacts UMP. 2 residues coordinate ATP: Gly-55 and Arg-59. UMP is bound by residues Asp-74 and 135 to 142 (TGNPYMTT). ATP contacts are provided by Asn-163, Tyr-169, and Asp-172.

The protein belongs to the UMP kinase family. In terms of assembly, homohexamer.

Its subcellular location is the cytoplasm. The catalysed reaction is UMP + ATP = UDP + ADP. It participates in pyrimidine metabolism; CTP biosynthesis via de novo pathway; UDP from UMP (UMPK route): step 1/1. Allosterically activated by GTP. Inhibited by UTP. Its function is as follows. Catalyzes the reversible phosphorylation of UMP to UDP. The protein is Uridylate kinase of Dehalococcoides mccartyi (strain CBDB1).